The primary structure comprises 934 residues: Protocadherin gamma-C3 (934 aa).

The signal sequence occupies residues Met1–Thr31. Cadherin domains follow at residues Val32–Phe135, Pro136–Phe244, Asn245–Ile352, Thr353–Ser457, Ser458–Val567, and Pro572–Glu685. The Extracellular segment spans residues Val32–Tyr693. Residues Asn245, Asn424, Asn478, Asn550, Asn615, and Asn689 are each glycosylated (N-linked (GlcNAc...) asparagine). Residues Leu694–Ile714 traverse the membrane as a helical segment. The Cytoplasmic segment spans residues Phe715 to Lys934. Disordered stretches follow at residues Glu804–Asn843 and Ala904–Lys934. Positions Ala812–Asn843 are enriched in polar residues. Residues Asn924–Lys934 show a composition bias toward basic residues.

Its subcellular location is the cell membrane. Its function is as follows. Potential calcium-dependent cell-adhesion protein. May be involved in the establishment and maintenance of specific neuronal connections in the brain. This chain is Protocadherin gamma-C3 (PCDHGC3), found in Pan troglodytes (Chimpanzee).